Here is a 1758-residue protein sequence, read N- to C-terminus: Y' element ATP-dependent helicase YIL177C (1758 aa).

Positions 668–845 (EIYMADTPSV…LQRIGLTGLA (178 aa)) constitute a Helicase ATP-binding domain. Residue 681–688 (APPGYGKT) participates in ATP binding. The Helicase C-terminal domain occupies 900-1051 (ALKLLLALFE…EFYGLESKKG (152 aa)). Over residues 1142-1360 (NVRTNATTNA…ATTTESTNAS (219 aa)) the composition is skewed to low complexity. Residues 1142 to 1384 (NVRTNATTNA…RFHPVTDINK (243 aa)) form a disordered region. Over residues 1361 to 1384 (AKEDANKDGNAEDNRFHPVTDINK) the composition is skewed to basic and acidic residues.

This sequence belongs to the helicase family. Yeast subtelomeric Y' repeat subfamily.

Its function is as follows. Catalyzes DNA unwinding and is involved in telomerase-independent telomere maintenance. This is Y' element ATP-dependent helicase YIL177C from Saccharomyces cerevisiae (strain ATCC 204508 / S288c) (Baker's yeast).